The primary structure comprises 669 residues: Trifunctional UDP-glucose 4,6-dehydratase/UDP-4-keto-6-deoxy-D-glucose 3,5-epimerase/UDP-4-keto-L-rhamnose-reductase RHM1 (669 aa).

13 to 19 (GAAGFIA) contributes to the NAD(+) binding site. Substrate is bound at residue T132. D133 acts as the Proton donor in catalysis. Catalysis depends on proton acceptor residues E134 and Y159. 391-397 (GKTGWIG) is a binding site for NADP(+).

It in the N-terminal section; belongs to the NAD(P)-dependent epimerase/dehydratase family. dTDP-glucose dehydratase subfamily. In the C-terminal section; belongs to the dTDP-4-dehydrorhamnose reductase family. NAD(+) serves as cofactor. NADP(+) is required as a cofactor. In terms of tissue distribution, expressed in roots, stems, leaves, seedlings, inflorescence tips, and siliques. Detected in the adaxial side of cotyledons, in the emerging leaves and in trichomes. Also detected in the root tip, more precisely in the epidermal cells in the meristematic and elongation zone.

The protein resides in the cytoplasm. The protein localises to the cytosol. The enzyme catalyses UDP-alpha-D-glucose = UDP-4-dehydro-6-deoxy-alpha-D-glucose + H2O. It functions in the pathway carbohydrate biosynthesis. Its function is as follows. Trifunctional enzyme involved in UDP-beta-L-rhamnose biosynthesis, a precursor of the primary cell wall components rhamnogalacturonan I (RG-I) and rhamnogalacturonan II (RG-II). Plays a major role in supplying UDP-rhamnose for flavonol biosynthesis. Catalyzes the dehydration of UDP-glucose to form UDP-4-dehydro-6-deoxy-D-glucose followed by the epimerization of the C3' and C5' positions of UDP-4-dehydro-6-deoxy-D-glucose to form UDP-4-keto-beta-L-rhamnose and the reduction of UDP-4-keto-beta-L-rhamnose to yield UDP-beta-L-rhamnose. This is Trifunctional UDP-glucose 4,6-dehydratase/UDP-4-keto-6-deoxy-D-glucose 3,5-epimerase/UDP-4-keto-L-rhamnose-reductase RHM1 from Arabidopsis thaliana (Mouse-ear cress).